We begin with the raw amino-acid sequence, 543 residues long: Chaperonin GroEL (543 aa).

ATP-binding positions include 30–33, lysine 51, 87–91, glycine 415, 480–482, and aspartate 496; these read TLGP, DGTTT, and DAA.

Belongs to the chaperonin (HSP60) family. As to quaternary structure, forms a cylinder of 14 subunits composed of two heptameric rings stacked back-to-back. Interacts with the co-chaperonin GroES.

The protein localises to the cytoplasm. The catalysed reaction is ATP + H2O + a folded polypeptide = ADP + phosphate + an unfolded polypeptide.. In terms of biological role, together with its co-chaperonin GroES, plays an essential role in assisting protein folding. The GroEL-GroES system forms a nano-cage that allows encapsulation of the non-native substrate proteins and provides a physical environment optimized to promote and accelerate protein folding. The sequence is that of Chaperonin GroEL from Hydrogenobaculum sp. (strain Y04AAS1).